The primary structure comprises 453 residues: MDSANLHQLQDQLQLVGSSSSSSSLDNNSDPSCYGASSAHQWSPGGISLNSVSLSHNYNNEMLNTRAHNNNNNNNTSECMSLSSIHNHSLIQQQDFPLQWPHDQSSYQHHEGLLKIKEELSSSTISDHQEGISKFTDMLNSPVITNYLKINEHKDYTEKLLLKSMSSGFPINGDYGSSLPSSSSSSSPSSQSHRGNFSQIYPSVNISSLSESRKMSMDDMSNISRPFDINMQVFDGRLFEGNVLVPPFNAQEISSLGMSRGSLPSFGLPFHHHLQQTLPHLSSSPTHQMEMFSNEPQTSEGKRHNFLMATKAGENASKKPRVESRSSCPPFKVRKEKLGDRIAALQQLVSPFGKTDTASVLMEAIGYIKFLQSQIETLSVPYMRASRNRPGKASQLVSQSQEGDEEETRDLRSRGLCLVPLSCMTYVTGDGGDGGGGVGTGFWPTPPGFGGGT.

Disordered regions lie at residues 1–37 and 177–197; these read MDSA…YGAS and SSLP…RGNF. Composition is skewed to low complexity over residues 8-32 and 177-192; these read QLQD…SDPS and SSLP…SSQS. Residues 322-371 form the bHLH domain; the sequence is VESRSSCPPFKVRKEKLGDRIAALQQLVSPFGKTDTASVLMEAIGYIKFL. The disordered stretch occupies residues 386-411; it reads SRNRPGKASQLVSQSQEGDEEETRDL.

Homodimer.

The protein localises to the nucleus. The polypeptide is Transcription factor bHLH110 (BHLH110) (Arabidopsis thaliana (Mouse-ear cress)).